The sequence spans 259 residues: ATP synthase subunit a (259 aa).

Transmembrane regions (helical) follow at residues 29–49 (TVNI…IWIF), 90–110 (IAPL…MDLI), 134–154 (DVNI…IYSI), 208–228 (LVFI…LSVP), and 230–250 (ALFH…LTIV).

This sequence belongs to the ATPase A chain family. In terms of assembly, F-type ATPases have 2 components, CF(1) - the catalytic core - and CF(0) - the membrane proton channel. CF(1) has five subunits: alpha(3), beta(3), gamma(1), delta(1), epsilon(1). CF(0) has three main subunits: a(1), b(2) and c(9-12). The alpha and beta chains form an alternating ring which encloses part of the gamma chain. CF(1) is attached to CF(0) by a central stalk formed by the gamma and epsilon chains, while a peripheral stalk is formed by the delta and b chains.

It localises to the cell inner membrane. In terms of biological role, key component of the proton channel; it plays a direct role in the translocation of protons across the membrane. In Aeromonas salmonicida (strain A449), this protein is ATP synthase subunit a.